Here is a 376-residue protein sequence, read N- to C-terminus: Serine-arginine protein 55 (376 aa).

The RRM 1 domain maps to 4–74 (SRVYVGGLPY…ERVVVEPARG (71 aa)). Residues 73 to 114 (RGTARGSNRDRYDDRYGGRRGGGGGRYNEKNKNSRSSSRYGP) are disordered. Residues 79-89 (SNRDRYDDRYG) show a composition bias toward basic and acidic residues. Residues 120 to 193 (YRLIVENLSS…RRIHLVEDRR (74 aa)) form the RRM 2 domain. Serine 165 is modified (phosphoserine). The span at 185-194 (RIHLVEDRRG) shows a compositional bias: basic and acidic residues. Residues 185-376 (RIHLVEDRRG…PDRNNESMDD (192 aa)) are disordered. Residues 196–205 (RSGGGGGSGR) are compositionally biased toward gly residues. Composition is skewed to basic residues over residues 215-263 (SRSR…SRSN) and 271-283 (SKSKSHSRTRSRS). Residues 284–304 (PKRERDSRSRSRSVSKRESRS) show a composition bias toward basic and acidic residues.

It belongs to the splicing factor SR family. In terms of processing, extensively phosphorylated on serine residues in the RS domain.

The protein localises to the nucleus. In terms of biological role, essential for development. May have a critical role in splicing or in controlling alternative splice site use of at least some pre-mRNA in vivo. Not required for all splicing. May play a general role in the condensation or decondensation of chromatin. The chain is Serine-arginine protein 55 (B52) from Drosophila melanogaster (Fruit fly).